Consider the following 246-residue polypeptide: UDP-N-acetyl-D-mannosaminuronic acid transferase (246 aa).

This sequence belongs to the glycosyltransferase 26 family.

It catalyses the reaction UDP-N-acetyl-alpha-D-mannosaminouronate + N-acetyl-alpha-D-glucosaminyl-di-trans,octa-cis-undecaprenyl diphosphate = beta-D-ManNAcA-(1-&gt;4)-alpha-D-GlcNAc-di-trans,octa-cis-undecaprenyl diphosphate + UDP + H(+). It functions in the pathway bacterial outer membrane biogenesis; enterobacterial common antigen biosynthesis. In terms of biological role, catalyzes the synthesis of Und-PP-GlcNAc-ManNAcA (Lipid II), the second lipid-linked intermediate involved in enterobacterial common antigen (ECA) synthesis. This is UDP-N-acetyl-D-mannosaminuronic acid transferase from Serratia proteamaculans (strain 568).